The primary structure comprises 37 residues: Large ribosomal subunit protein bL36 (37 aa).

It belongs to the bacterial ribosomal protein bL36 family.

The sequence is that of Large ribosomal subunit protein bL36 (rpmJ) from Mycoplasma sp.